Reading from the N-terminus, the 199-residue chain is MEASPASGPRHLMDPHIFTSNFNNGIGRHKTYLCYEVERLDNGTSVKMDQHRGFLHNQAKNLLCGFYGRHAELRFLDLVPSLQLDPAQIYRVTWFISWSPCFSWGCAGEVRAFLQENTHVRLRIFAARIYDYDPLYKEALQMLRDAGAQVSIMTYDEFKHCWDTFVDHQGCPFQPWDGLDEHSQALSGRLRAILQNQGN.

The CMP/dCMP-type deaminase domain maps to 27–143 (GRHKTYLCYE…PLYKEALQML (117 aa)). His-70 contributes to the Zn(2+) binding site. The active-site Proton donor is Glu-72. Positions 101 and 106 each coordinate Zn(2+).

The protein belongs to the cytidine and deoxycytidylate deaminase family. In terms of assembly, interacts with AGO2. Interacts with TRIB3 (via N-terminus). Requires Zn(2+) as cofactor. In terms of tissue distribution, expressed in peripheral leukocytes with higher expression in CD14-positive phagocytic cells. Highly expressed in keratinocytes and in periphery blood monocytes. Also detected in non-lymphoid tissues including lung and adipose tissues. Found at high levels in colorectal adenocarcinoma, Burkitt's lymphoma and chronic myelogenous leukemia.

The protein localises to the nucleus. It is found in the cytoplasm. The catalysed reaction is a 2'-deoxycytidine in single-stranded DNA + H2O + H(+) = a 2'-deoxyuridine in single-stranded DNA + NH4(+). Its function is as follows. DNA deaminase (cytidine deaminase) with restriction activity against viruses, foreign DNA and mobility of retrotransposons. Exhibits antiviral activity against adeno-associated virus (AAV) and human T-cell leukemia virus type 1 (HTLV-1) and may inhibit the mobility of LTR and non-LTR retrotransposons. Selectively targets single-stranded DNA and can deaminate both methylcytosine and cytosine in foreign DNA. Can induce somatic hypermutation in the nuclear and mitochondrial DNA. May also play a role in the epigenetic regulation of gene expression through the process of active DNA demethylation. The protein is DNA dC-&gt;dU-editing enzyme APOBEC-3A (APOBEC3A) of Homo sapiens (Human).